The sequence spans 725 residues: Another transcription unit protein (725 aa).

A compositionally biased stretch (acidic residues) spans 1–10 (MGSQNSDDDS). 3 disordered regions span residues 1–379 (MGSQ…PETR), 566–603 (RQAM…EGSD), and 617–725 (YKKG…SDND). Over residues 11-70 (GSSGSSRSGSRSVTPQGGSAPGSQRSRRSGSGSDRSRSGSRSSRSRSGSGSPRSARSGSA) the composition is skewed to low complexity. Over residues 82-101 (RSKRSRSAHSRRSGSARSRK) the composition is skewed to basic residues. A compositionally biased stretch (polar residues) spans 104–116 (TPESPQSHRSGSL). Positions 117–140 (QSRKSGSPQSRRSGSPQSRKSGST) are enriched in low complexity. The segment covering 141-160 (HSRRSGSAHSRRSGSARSRK) has biased composition (basic residues). Phosphoserine is present on residues Ser175, Ser186, Ser188, and Ser190. The segment covering 206 to 223 (SRSRSRSRSGSRTSRSRS) has biased composition (basic residues). Residues 224-242 (KTGTPSPNRSRSGSASGSG) are compositionally biased toward low complexity. Phosphoserine occurs at positions 265, 267, and 269. Position 286 is a phosphothreonine (Thr286). Phosphoserine is present on residues Ser288, Ser290, and Ser312. Residues 306-318 (GDADDISDDEDEA) are compositionally biased toward acidic residues. Residues 325–353 (SPVRSKSRSQSKSHSHSRSMSHSRSRSRS) show a composition bias toward basic residues. The segment covering 354–369 (RSRDKVESQVESAPKE) has biased composition (basic and acidic residues). Position 355 is a phosphoserine (Ser355). The span at 571 to 582 (NQHKSLPKKKKP) shows a compositional bias: basic residues. Residue Thr593 is modified to Phosphothreonine. Phosphoserine occurs at positions 595, 602, and 631. Thr632 carries the phosphothreonine modification. A phosphoserine mark is found at Ser635, Ser636, and Ser642. A compositionally biased stretch (basic and acidic residues) spans 644–665 (FEARRSKKVDKAKASKALRDSD). Residues 710–725 (SGSGSGSGSGSGSDND) show a composition bias toward gly residues.

The protein is Another transcription unit protein (Atu) of Drosophila melanogaster (Fruit fly).